The following is a 507-amino-acid chain: ATP synthase subunit alpha (507 aa).

Glycine 170 to threonine 177 is an ATP binding site.

This sequence belongs to the ATPase alpha/beta chains family. As to quaternary structure, F-type ATPases have 2 components, CF(1) - the catalytic core - and CF(0) - the membrane proton channel. CF(1) has five subunits: alpha(3), beta(3), gamma(1), delta(1), epsilon(1). CF(0) has three main subunits: a(1), b(2) and c(9-12). The alpha and beta chains form an alternating ring which encloses part of the gamma chain. CF(1) is attached to CF(0) by a central stalk formed by the gamma and epsilon chains, while a peripheral stalk is formed by the delta and b chains.

Its subcellular location is the cell inner membrane. It catalyses the reaction ATP + H2O + 4 H(+)(in) = ADP + phosphate + 5 H(+)(out). Functionally, produces ATP from ADP in the presence of a proton gradient across the membrane. The alpha chain is a regulatory subunit. In Fervidobacterium nodosum (strain ATCC 35602 / DSM 5306 / Rt17-B1), this protein is ATP synthase subunit alpha.